The sequence spans 71 residues: Large ribosomal subunit protein uL29 (71 aa).

Belongs to the universal ribosomal protein uL29 family.

This chain is Large ribosomal subunit protein uL29, found in Methanocella arvoryzae (strain DSM 22066 / NBRC 105507 / MRE50).